Reading from the N-terminus, the 522-residue chain is Poly(A) polymerase (522 aa).

ATP is bound by residues 63-65, 76-78, D130, K193, Y202, and 211-212; these read YGS, DID, and GI. Mg(2+) contacts are provided by D76, D78, and D130. Residues 475–522 are disordered; the sequence is QLKAKEENSIPNEEKKEQLKKEMKQEANTIVKNSSTDDDFMKRFTRKN. Residues 476 to 499 are compositionally biased toward basic and acidic residues; sequence LKAKEENSIPNEEKKEQLKKEMKQ.

The protein belongs to the poly(A) polymerase family. It depends on Mg(2+) as a cofactor. Mn(2+) serves as cofactor.

The protein localises to the cytoplasm. It is found in the nucleus. It catalyses the reaction RNA(n) + ATP = RNA(n)-3'-adenine ribonucleotide + diphosphate. In terms of biological role, polymerase that creates the 3'-poly(A) tail of mRNA's. May acquire specificity through interaction with a cleavage and polyadenylation factor. This is Poly(A) polymerase from Entamoeba histolytica (strain ATCC 30459 / HM-1:IMSS / ABRM).